The chain runs to 340 residues: NADH-quinone oxidoreductase subunit H (340 aa).

Transmembrane regions (helical) follow at residues 4 to 24 (TIGI…PLLL), 78 to 98 (YLFV…WAVI), 113 to 133 (VLYL…AGWA), 151 to 171 (VSYE…AGSM), 184 to 204 (MLHW…IAGI), 244 to 264 (SMIL…LSPF), 273 to 293 (IFFV…FLFV), and 316 to 336 (VLIP…VAHV).

Belongs to the complex I subunit 1 family. As to quaternary structure, NDH-1 is composed of 14 different subunits. Subunits NuoA, H, J, K, L, M, N constitute the membrane sector of the complex.

The protein localises to the cell inner membrane. It catalyses the reaction a quinone + NADH + 5 H(+)(in) = a quinol + NAD(+) + 4 H(+)(out). In terms of biological role, NDH-1 shuttles electrons from NADH, via FMN and iron-sulfur (Fe-S) centers, to quinones in the respiratory chain. The immediate electron acceptor for the enzyme in this species is believed to be ubiquinone. Couples the redox reaction to proton translocation (for every two electrons transferred, four hydrogen ions are translocated across the cytoplasmic membrane), and thus conserves the redox energy in a proton gradient. This subunit may bind ubiquinone. This chain is NADH-quinone oxidoreductase subunit H, found in Legionella pneumophila (strain Paris).